Here is a 527-residue protein sequence, read N- to C-terminus: MDDITAPQTSAGSSSGTSTNTSGSRSFLPTFSNVGVGLKANVQGTLGGRQTTTTGNNIPKWATLDQANLQLWTGAGWRNDKTTSGSTGNANDTKFTSATGSGSGQGSSSGTNTSAGNPDGLQADKVDQNGQVKTSVQEATSGDNLTNYTNLPPANLTPTADWPNALSFTNKNNAQRAQLFLRGLLGSIPVLVNKSGQDDNSKFKAEDQKWSYTDLQSDQTKLNLPAYGEVNGLLNPALVETYFGNTRASGSGSNTTSSPGIGFKIPEQSGTNTTSKAVLITPGLAWTPQDVGNIVVSGTSFSFQLGGWLVTFTDFIKPRAGYLGLQLTGLDVSEATQRELIWAKRPWAAFRGSWVNRLGRVESVWDFKGVWADQAQLAAQAATSSTTTTATGATLPEHPNALAYQISYTDKDSYKASTQGSGQTNSQNNSPYLHFIKPKKVESTTQLDQGLKNLLDPNQVRTKLRQSFGTDHSTQPQPQSLKTTTPVFGRSSGNLSSVFSGGGAGGGSSGSGQSGVDLSPVERVSGH.

Disordered stretches follow at residues Met1–Ser26, Gly76–Tyr148, Ala248–Ser269, and Phe468–His527. A compositionally biased stretch (low complexity) spans Thr9–Ser26. Polar residues predominate over residues Thr82–Phe95. Over residues Ser108–Asn117 the composition is skewed to low complexity. The span at Gln128–Tyr148 shows a compositional bias: polar residues. Over residues Ala248–Gly262 the composition is skewed to low complexity. Polar residues predominate over residues Phe468–Leu495. A compositionally biased stretch (gly residues) spans Ser500–Gln513.

It belongs to the adhesin P1 family.

The polypeptide is Putative adhesin P1-like protein MPN_500 (Mycoplasma pneumoniae (strain ATCC 29342 / M129 / Subtype 1) (Mycoplasmoides pneumoniae)).